The sequence spans 611 residues: Chaperone protein DnaK (611 aa).

The residue at position 172 (threonine 172) is a Phosphothreonine; by autocatalysis. Positions 575–611 (AAQAAQAQQDGGNESADKQDDNVVDADYEEVNDDDKK) are disordered. Acidic residues predominate over residues 596-611 (NVVDADYEEVNDDDKK).

Belongs to the heat shock protein 70 family.

Functionally, acts as a chaperone. This chain is Chaperone protein DnaK, found in Shouchella clausii (strain KSM-K16) (Alkalihalobacillus clausii).